Reading from the N-terminus, the 212-residue chain is MSDLSDIRREYTKGGLRRKDLPDNPMALFETWMTQAKEANLSDPTAMCVATVDENGQPFQRIVLLKRFDDTGFVFFTNLESRKAKQIAINKQISLLFPWHPLERQVAVLGEAEPLSMMEVAKYFISRPKDSQIAAWVSKQSSKITARQALEGKFNEMKAKFAQGEVPIPKFWGGFLVRPKSIEFWQGGEHRLHDRFIYTKAASEWQIDRLAP.

Substrate is bound by residues 8–11 (RREY) and Lys66. FMN is bound by residues 61–66 (RIVLLK), 76–77 (FT), Arg82, Lys83, and Gln105. The substrate site is built by Tyr123, Arg127, and Ser131. Residues 140 to 141 (QS) and Trp185 contribute to the FMN site. Residue 191-193 (RLH) coordinates substrate. Residue Arg195 coordinates FMN.

The protein belongs to the pyridoxamine 5'-phosphate oxidase family. As to quaternary structure, homodimer. It depends on FMN as a cofactor.

The enzyme catalyses pyridoxamine 5'-phosphate + O2 + H2O = pyridoxal 5'-phosphate + H2O2 + NH4(+). The catalysed reaction is pyridoxine 5'-phosphate + O2 = pyridoxal 5'-phosphate + H2O2. It functions in the pathway cofactor metabolism; pyridoxal 5'-phosphate salvage; pyridoxal 5'-phosphate from pyridoxamine 5'-phosphate: step 1/1. The protein operates within cofactor metabolism; pyridoxal 5'-phosphate salvage; pyridoxal 5'-phosphate from pyridoxine 5'-phosphate: step 1/1. Functionally, catalyzes the oxidation of either pyridoxine 5'-phosphate (PNP) or pyridoxamine 5'-phosphate (PMP) into pyridoxal 5'-phosphate (PLP). In Shewanella denitrificans (strain OS217 / ATCC BAA-1090 / DSM 15013), this protein is Pyridoxine/pyridoxamine 5'-phosphate oxidase.